The sequence spans 300 residues: uncharacterized protein (300 aa).

The active-site Proton donor is the Tyr-53. Position 210–220 (210–220 (SPLAGGKVFTE)) interacts with NADP(+).

The protein belongs to the aldo/keto reductase family. Aldo/keto reductase 2 subfamily.

This is an uncharacterized protein from Bacillus subtilis (strain 168).